Reading from the N-terminus, the 712-residue chain is UvrABC system protein B (712 aa).

Residues 35–421 form the Helicase ATP-binding domain; sequence RRVQAGEKDV…SDGAVEQIIR (387 aa). 48–55 contacts ATP; that stretch reads GATGTGKS. The Beta-hairpin signature appears at 101–124; the sequence is YYDYYQPEAYVPQSDTYIEKDSSI. The Helicase C-terminal domain occupies 438–604; that stretch reads QIDDLVHEIR…PLRKKINDIV (167 aa). The disordered stretch occupies residues 625 to 655; it reads TKEGKGAKAPVPALGGQKTGGAKAARGRAKE. The UVR domain maps to 667–702; it reads AEQIEDLTTRMRAAAADLQFEIAARLRDEVSEMKKE.

This sequence belongs to the UvrB family. In terms of assembly, forms a heterotetramer with UvrA during the search for lesions. Interacts with UvrC in an incision complex.

Its subcellular location is the cytoplasm. The UvrABC repair system catalyzes the recognition and processing of DNA lesions. A damage recognition complex composed of 2 UvrA and 2 UvrB subunits scans DNA for abnormalities. Upon binding of the UvrA(2)B(2) complex to a putative damaged site, the DNA wraps around one UvrB monomer. DNA wrap is dependent on ATP binding by UvrB and probably causes local melting of the DNA helix, facilitating insertion of UvrB beta-hairpin between the DNA strands. Then UvrB probes one DNA strand for the presence of a lesion. If a lesion is found the UvrA subunits dissociate and the UvrB-DNA preincision complex is formed. This complex is subsequently bound by UvrC and the second UvrB is released. If no lesion is found, the DNA wraps around the other UvrB subunit that will check the other stand for damage. The chain is UvrABC system protein B from Streptomyces coelicolor (strain ATCC BAA-471 / A3(2) / M145).